The chain runs to 109 residues: Small ribosomal subunit protein uS10 (109 aa).

This sequence belongs to the universal ribosomal protein uS10 family. Part of the 30S ribosomal subunit.

Functionally, involved in the binding of tRNA to the ribosomes. The chain is Small ribosomal subunit protein uS10 from Wolbachia pipientis wMel.